Here is a 159-residue protein sequence, read N- to C-terminus: 2-C-methyl-D-erythritol 2,4-cyclodiphosphate synthase (159 aa).

A divalent metal cation-binding residues include Asp-8 and His-10. 4-CDP-2-C-methyl-D-erythritol 2-phosphate is bound by residues 8–10 (DVH) and 34–35 (HS). His-42 contacts a divalent metal cation. 4-CDP-2-C-methyl-D-erythritol 2-phosphate-binding positions include 56–58 (DIG), 61–65 (FPDTD), 100–106 (AQAPKML), 132–135 (TTTE), Phe-139, and Arg-142.

The protein belongs to the IspF family. As to quaternary structure, homotrimer. It depends on a divalent metal cation as a cofactor.

It carries out the reaction 4-CDP-2-C-methyl-D-erythritol 2-phosphate = 2-C-methyl-D-erythritol 2,4-cyclic diphosphate + CMP. Its pathway is isoprenoid biosynthesis; isopentenyl diphosphate biosynthesis via DXP pathway; isopentenyl diphosphate from 1-deoxy-D-xylulose 5-phosphate: step 4/6. Its function is as follows. Involved in the biosynthesis of isopentenyl diphosphate (IPP) and dimethylallyl diphosphate (DMAPP), two major building blocks of isoprenoid compounds. Catalyzes the conversion of 4-diphosphocytidyl-2-C-methyl-D-erythritol 2-phosphate (CDP-ME2P) to 2-C-methyl-D-erythritol 2,4-cyclodiphosphate (ME-CPP) with a corresponding release of cytidine 5-monophosphate (CMP). This Escherichia coli O127:H6 (strain E2348/69 / EPEC) protein is 2-C-methyl-D-erythritol 2,4-cyclodiphosphate synthase.